A 490-amino-acid polypeptide reads, in one-letter code: Costunolide synthase (490 aa).

The chain crosses the membrane as a helical; Signal-anchor for type II membrane protein span at residues 3–23; the sequence is PLTIVSLAVASFLLFAFWALS. N-linked (GlcNAc...) asparagine glycosylation is found at N167 and N255. C432 contacts heme.

It belongs to the cytochrome P450 family. It depends on heme as a cofactor.

The protein resides in the membrane. It carries out the reaction germacra-1(10),4,11(13)-trien-12-oate + reduced [NADPH--hemoprotein reductase] + O2 = (+)-costunolide + oxidized [NADPH--hemoprotein reductase] + 2 H2O. Its pathway is secondary metabolite biosynthesis; terpenoid biosynthesis. Its function is as follows. Involved in the biosynthesis of germacrene-derived sesquiterpene lactones. Component of the parthenolide biosynthetic pathway; parthenolide and conjugates are promising anti-cancer drugs highly active against colon cancer cells. Hydroxylates germacrene A acid to 6-alpha-hydroxy-germacrne A acid, a precursor of sesquiterpene lactones that spontaneously undergoes a lactonization which yields costunolide. The sequence is that of Costunolide synthase from Lactuca sativa (Garden lettuce).